The following is a 264-amino-acid chain: Thiazole synthase (264 aa).

The Schiff-base intermediate with DXP role is filled by Lys101. Residues Gly162, Ala189–Gly190, and Asn211–Thr212 each bind 1-deoxy-D-xylulose 5-phosphate. Positions Lys245–Gln264 are disordered.

Belongs to the ThiG family. In terms of assembly, homotetramer. Forms heterodimers with either ThiH or ThiS.

It localises to the cytoplasm. The enzyme catalyses [ThiS sulfur-carrier protein]-C-terminal-Gly-aminoethanethioate + 2-iminoacetate + 1-deoxy-D-xylulose 5-phosphate = [ThiS sulfur-carrier protein]-C-terminal Gly-Gly + 2-[(2R,5Z)-2-carboxy-4-methylthiazol-5(2H)-ylidene]ethyl phosphate + 2 H2O + H(+). Its pathway is cofactor biosynthesis; thiamine diphosphate biosynthesis. Its function is as follows. Catalyzes the rearrangement of 1-deoxy-D-xylulose 5-phosphate (DXP) to produce the thiazole phosphate moiety of thiamine. Sulfur is provided by the thiocarboxylate moiety of the carrier protein ThiS. In vitro, sulfur can be provided by H(2)S. The polypeptide is Thiazole synthase (Cellvibrio japonicus (strain Ueda107) (Pseudomonas fluorescens subsp. cellulosa)).